Here is a 215-residue protein sequence, read N- to C-terminus: MSGPDAQTKMQFLFALRSRGVTEAAVLEAMEAVDRGLFLRGIFSERAYEDVPLPIACGQTISQPSVVGLMTQALQVNPRDTVLEVGTGSGYQAAILAKLARRVYTVDRHGRLVREARQVFQQMSLSNITSLVGDGSHGMPDQAPFDRIIVTAAAEDPPGPLLAQLKVGGIMVVPVGQSDAVQTLIRVRKTENGLEYDELRPVRFVPLLEGLGKDT.

The active site involves S62.

This sequence belongs to the methyltransferase superfamily. L-isoaspartyl/D-aspartyl protein methyltransferase family.

The protein localises to the cytoplasm. The enzyme catalyses [protein]-L-isoaspartate + S-adenosyl-L-methionine = [protein]-L-isoaspartate alpha-methyl ester + S-adenosyl-L-homocysteine. Catalyzes the methyl esterification of L-isoaspartyl residues in peptides and proteins that result from spontaneous decomposition of normal L-aspartyl and L-asparaginyl residues. It plays a role in the repair and/or degradation of damaged proteins. The protein is Protein-L-isoaspartate O-methyltransferase of Ruegeria sp. (strain TM1040) (Silicibacter sp.).